Here is a 328-residue protein sequence, read N- to C-terminus: MNQQTTNRDTGEAAATNAPANSATSTSTPDNQPTPLDAFEVLLITGMSGAGRSHAADCVEDMGWYVVDNLPPKLLIPLVDMMTTSGSGSESGVHKLAAVIDVRSSYFDELAAVLGHLDDLGVKTRILFLDASNEVLIKRYESVRRPHPLQHGNRLIDGILEERHLLEDLKERADWVIDTSSLSIHQLSTKLYEAMLGSGPTTVAVHIFSFGFKYGMPIDADFVADVRFLPNPFWVPSLRELTGRDKPVADYVLSSKGAKEFLDAYEKAIEIALEGYAQEDKHYVTIAVGCTGGQHRSVAMSEELARRLRAHGLNVTVSAREQHKRHSS.

The tract at residues 1-35 (MNQQTTNRDTGEAAATNAPANSATSTSTPDNQPTP) is disordered. Over residues 13–29 (AAATNAPANSATSTSTP) the composition is skewed to low complexity. An ATP-binding site is contributed by 46–53 (GMSGAGRS). 101–104 (DVRS) contacts GTP.

It belongs to the RapZ-like family.

Functionally, displays ATPase and GTPase activities. This Bifidobacterium longum (strain NCC 2705) protein is Nucleotide-binding protein BL0705.